A 136-amino-acid polypeptide reads, in one-letter code: Small ribosomal subunit protein uS12 (136 aa).

Aspartate 89 carries the 3-methylthioaspartic acid modification. Positions threonine 104 to lysine 136 are disordered. The segment covering threonine 111 to lysine 123 has biased composition (basic residues). Residues proline 124 to lysine 136 are compositionally biased toward low complexity.

This sequence belongs to the universal ribosomal protein uS12 family. As to quaternary structure, part of the 30S ribosomal subunit. Contacts proteins S8 and S17. May interact with IF1 in the 30S initiation complex.

With S4 and S5 plays an important role in translational accuracy. Functionally, interacts with and stabilizes bases of the 16S rRNA that are involved in tRNA selection in the A site and with the mRNA backbone. Located at the interface of the 30S and 50S subunits, it traverses the body of the 30S subunit contacting proteins on the other side and probably holding the rRNA structure together. The combined cluster of proteins S8, S12 and S17 appears to hold together the shoulder and platform of the 30S subunit. This Parabacteroides distasonis (strain ATCC 8503 / DSM 20701 / CIP 104284 / JCM 5825 / NCTC 11152) protein is Small ribosomal subunit protein uS12.